Consider the following 285-residue polypeptide: Enterobactin synthase component B (285 aa).

The interval 2-213 (AIPKLQAYAL…EELLPAPIPA (212 aa)) is isochorismatase. Residues 209-284 (APIPASKAAL…AWWKLLSREV (76 aa)) form the Carrier domain. 3 residues coordinate Mg(2+): Asp-227, Gly-242, and Asp-244. Ser-245 bears the O-(pantetheine 4'-phosphoryl)serine mark.

It in the N-terminal section; belongs to the isochorismatase family. As to quaternary structure, proteins EntB, EntD, EntE, and EntF form a multienzyme complex called enterobactin synthase. Homodimer. Also forms a specific pairwise interaction with EntC; this interaction likely facilitates substrate channeling to connect the EntB and EntC active sites. Mg(2+) is required as a cofactor. In terms of processing, 4'-phosphopantetheine is transferred from CoA to a specific serine of apo-EntB by EntD. Holo-EntB so formed is then acylated with 2,3-dihydroxybenzoate in a reaction catalyzed by EntE.

The protein localises to the cytoplasm. The enzyme catalyses 3 2,3-dihydroxybenzoate + 3 L-serine + 6 ATP = enterobactin + 6 AMP + 6 diphosphate + 4 H(+). It carries out the reaction isochorismate + H2O = (2S,3S)-2,3-dihydroxy-2,3-dihydrobenzoate + pyruvate. Its pathway is siderophore biosynthesis; enterobactin biosynthesis. Functionally, involved in the biosynthesis of the siderophore enterobactin (enterochelin), which is a macrocyclic trimeric lactone of N-(2,3-dihydroxybenzoyl)-serine. The serine trilactone serves as a scaffolding for the three catechol functionalities that provide hexadentate coordination for the tightly ligated iron(3+) atoms. EntB is a bifunctional protein that serves as an isochorismate lyase and an aryl carrier protein (ArCP). Catalyzes the conversion of isochorismate to 2,3-dihydro-2,3-dihydroxybenzoate (2,3-diDHB), the precursor of 2,3-dihydroxybenzoate (DHB). In the enterobactin assembly, EntB functions as an aryl carrier protein phosphopantetheinylated near the C terminus by EntD to yield holo-EntB, which is then acylated by EntE with 2,3-dihydroxybenzoyl-AMP to form DHB-holo-EntB. Then this product will serve in the formation of the amide bond between 2,3-dihydroxybenzoate (DHB) and L-serine. This chain is Enterobactin synthase component B, found in Escherichia coli O157:H7.